Reading from the N-terminus, the 267-residue chain is Tryptophan synthase alpha chain (267 aa).

Catalysis depends on proton acceptor residues Glu-49 and Asp-60.

It belongs to the TrpA family. As to quaternary structure, tetramer of two alpha and two beta chains.

It catalyses the reaction (1S,2R)-1-C-(indol-3-yl)glycerol 3-phosphate + L-serine = D-glyceraldehyde 3-phosphate + L-tryptophan + H2O. It functions in the pathway amino-acid biosynthesis; L-tryptophan biosynthesis; L-tryptophan from chorismate: step 5/5. The alpha subunit is responsible for the aldol cleavage of indoleglycerol phosphate to indole and glyceraldehyde 3-phosphate. The chain is Tryptophan synthase alpha chain from Acaryochloris marina (strain MBIC 11017).